The chain runs to 201 residues: UPF0301 protein RHA1_ro03630 (201 aa).

Belongs to the UPF0301 (AlgH) family.

The sequence is that of UPF0301 protein RHA1_ro03630 from Rhodococcus jostii (strain RHA1).